The primary structure comprises 342 residues: viral G-protein coupled receptor (342 aa).

Residues 1–51 (MAAEDFLTIFLDDDESWNETLNMSGYDYSGNFSLEVSVCEMTTVVPYTWNV) lie on the Extracellular side of the membrane. N-linked (GlcNAc...) asparagine; by host glycans are attached at residues N18, N22, and N31. A helical membrane pass occupies residues 52–72 (GILSLIFLINVLGNGLVTYIF). Residues 73-92 (CKHRSRAGAIDILLLGICLN) lie on the Cytoplasmic side of the membrane. A helical membrane pass occupies residues 93-113 (SLCLSISLLAEVLMFLFPNII). At 114–121 (STGLCRLE) the chain is on the extracellular side. A helical membrane pass occupies residues 122 to 142 (IFFYYLYVYLDIFSVVCVSLV). Residues 143–159 (RYLLVAYSTRSWPKKQS) are Cytoplasmic-facing. A helical transmembrane segment spans residues 160–180 (LGWVLTSAALLIALVLSGDAC). Residues 181 to 217 (RHRSRVVDPVSKQAMCYENAGNMTADWRLHVRTVSVT) are Extracellular-facing. Residues 218–238 (AGFLLPLALLILFYALTWCVV) form a helical membrane-spanning segment. At 239–251 (RRTKLQARRKVRG) the chain is on the cytoplasmic side. The chain crosses the membrane as a helical span at residues 252–272 (VIVAVVLLFFVFCFPYHVLNL). Over 273 to 293 (LDTLLRRRWIRDSCYTRGLIN) the chain is Extracellular. Residues 294–314 (VGLAVTSLLQALYSAVVPLIY) form a helical membrane-spanning segment. Residues 315-342 (SCLGSLFRQRMYGLFQSLRQSFMSGATT) lie on the Cytoplasmic side of the membrane.

It belongs to the G-protein coupled receptor 1 family. As to quaternary structure, interacts with protein K7; this interaction promotes vGPCR proteasomal degradation. Interacts with host CADM1; this interaction is essential for chronic NF-kappa-B activation.

Its subcellular location is the host cell membrane. In terms of biological role, receptor that signals constitutively via several signaling pathways including PI3K/AKT as well as mitogen- and stress-activated/MAP kinases. Promotes host cell proliferation and survival, modulates cell migration, stimulates angiogenesis, and recruits inflammatory cells, both in expressing cells and in neighboring cells. Maintains chronic activation of NF-kappa-B via interaction with host CADM1. This Human herpesvirus 8 type P (isolate GK18) (HHV-8) protein is viral G-protein coupled receptor (ORF74).